The chain runs to 1240 residues: Structural polyprotein (1240 aa).

Positions 1 to 35 (MFPYPTLNYPPMAPINPMAYRDPNPPRQVAPFRPP) are necessary for nucleocapsid assembly and virus assembly. Residues 1–102 (MFPYPTLNYP…RKPKPGKRQR (102 aa)) form a disordered region. Residues 23–34 (PNPPRQVAPFRP) are compositionally biased toward pro residues. The tract at residues 36–69 (LAAQIEDLRRSIANLTLKQRAPNPPAGPPAKRKK) is host transcription inhibition. The short motif at 43 to 50 (LRRSIANL) is the Supraphysiological nuclear export signal element. An N-linked (GlcNAc...) asparagine; by host glycan is attached at N49. Over residues 65–102 (AKRKKPAPKPKPAQAKKKRPPPPAKKQKRKPKPGKRQR) the composition is skewed to basic residues. The Nuclear localization signal signature appears at 66–70 (KRKKP). A binding to the viral RNA region spans residues 82-112 (KRPPPPAKKQKRKPKPGKRQRMCMKLESDKT). The segment at 97 to 111 (PGKRQRMCMKLESDK) is ribosome-binding. At S109 the chain carries Phosphoserine. The 150-residue stretch at 111-260 (KTFPIMLNGQ…KDTPEGSEPW (150 aa)) folds into the Peptidase S3 domain. Phosphothreonine is present on T112. Active-site charge relay system residues include H137, D159, and S211. The segment at 261 to 272 (SLATVMCVLANI) is functions as an uncleaved signal peptide for the precursor of protein E3/E2. At 261 to 682 (SLATVMCVLA…HEVVVYYYNR (422 aa)) the chain is on the extracellular side. N271 and N638 each carry an N-linked (GlcNAc...) asparagine; by host glycan. Residues 683–703 (YPLTTIIGLCTCVAIIMVSCV) form a helical membrane-spanning segment. At 704–743 (HPCGSFAGLRNLCITPYKLAPNAQVPILLALLCCIKPTRA) the chain is on the cytoplasmic side. 4 S-palmitoyl cysteine; by host lipidation sites follow: C706, C716, C736, and C737. The segment at 715–735 (LCITPYKLAPNAQVPILLALL) is transient transmembrane before p62-6K protein processing. Over 744-758 (DDTLQVLNYLWNNNQ) the chain is Extracellular. A helical membrane pass occupies residues 759 to 779 (NFFWMQTLIPLAALIVCMRIV). Position 780 (R780) is a topological domain, cytoplasmic. The helical transmembrane segment at 781–801 (CLFCCGPAFLLVCGAWAAAYE) threads the bilayer. Residues 802-1216 (HTAVMPNKVG…WSWLKVLVGG (415 aa)) are Extracellular-facing. Residue N834 is glycosylated (N-linked (GlcNAc...) asparagine; by host). 4 disulfide bridges follow: C848–C913, C861–C893, C862–C895, and C867–C877. The tract at residues 883 to 900 (VYPFMWGGAYCFCDTENT) is E1 fusion peptide loop. The N-linked (GlcNAc...) asparagine; by host glycan is linked to N933. 3 disulfides stabilise this stretch: C1059-C1071, C1101-C1176, and C1106-C1180. A helical transmembrane segment spans residues 1217–1237 (TSAFIVLGLIATAVVALVLFF). At 1238 to 1240 (HRH) the chain is on the cytoplasmic side.

As to quaternary structure, part of a tetrameric complex composed of host CRM1, host importin alpha/beta dimer and the viral capsid; this complex blocks the receptor-mediated transport through the nuclear pore. Interacts with host phosphatase PPP1CA; this interaction dephosphorylates the capsid protein, which increases its ability to bind to the viral genome. Interacts with host karyopherin KPNA4; this interaction allows the nuclear import of the viral capsid protein. Interacts with spike glycoprotein E2. Interacts with host IRAK1; the interaction leads to inhibition of IRAK1-dependent signaling. In terms of assembly, the precursor of protein E3/E2 and E1 form a heterodimer shortly after synthesis. The precursor of protein E3/E2 and E1 form a heterodimer shortly after synthesis. Processing of the precursor of protein E3/E2 into E2 and E3 results in a heterodimer of the spike glycoproteins E2 and E1. Spike at virion surface are constituted of three E2-E1 heterodimers. After target cell attachment and endocytosis, E1 change conformation to form homotrimers. Interacts with 6K protein. As to quaternary structure, processing of the precursor of protein E3/E2 into E2 and E3 results in a heterodimer of the spike glycoproteins E2 and E1. Spike at virion surface are constituted of three E2-E1 heterodimers. Interacts with 6K protein. In terms of assembly, interacts with spike glycoprotein E1. Interacts with spike glycoprotein E2. Post-translationally, structural polyprotein: Specific enzymatic cleavages in vivo yield mature proteins. Capsid protein is auto-cleaved during polyprotein translation, unmasking a signal peptide at the N-terminus of the precursor of E3/E2. The remaining polyprotein is then targeted to the host endoplasmic reticulum, where host signal peptidase cleaves it into pE2, 6K and E1 proteins. pE2 is further processed to mature E3 and E2 by host furin in trans-Golgi vesicle. Phosphorylated on serine and threonine residues. In terms of processing, palmitoylated via thioester bonds. These palmitoylations may induce disruption of the C-terminus transmembrane. This would result in the reorientation of E2 C-terminus from lumenal to cytoplasmic side. Post-translationally, N-glycosylated. Palmitoylated via thioester bonds.

The protein resides in the virion. It is found in the host cytoplasm. The protein localises to the host cell membrane. Its subcellular location is the host nucleus. It localises to the virion membrane. The enzyme catalyses Autocatalytic release of the core protein from the N-terminus of the togavirus structural polyprotein by hydrolysis of a -Trp-|-Ser- bond.. Forms an icosahedral capsid with a T=4 symmetry composed of 240 copies of the capsid protein surrounded by a lipid membrane through which penetrate 80 spikes composed of trimers of E1-E2 heterodimers. The capsid protein binds to the viral RNA genome at a site adjacent to a ribosome binding site for viral genome translation following genome release. Possesses a protease activity that results in its autocatalytic cleavage from the nascent structural protein. Following its self-cleavage, the capsid protein transiently associates with ribosomes, and within several minutes the protein binds to viral RNA and rapidly assembles into icosahedric core particles. The resulting nucleocapsid eventually associates with the cytoplasmic domain of the spike glycoprotein E2 at the cell membrane, leading to budding and formation of mature virions. In case of infection, new virions attach to target cells and after clathrin-mediated endocytosis their membrane fuses with the host endosomal membrane. This leads to the release of the nucleocapsid into the cytoplasm, followed by an uncoating event necessary for the genomic RNA to become accessible. The uncoating might be triggered by the interaction of capsid proteins with ribosomes. Binding of ribosomes would release the genomic RNA since the same region is genomic RNA-binding and ribosome-binding. Specifically inhibits interleukin-1 receptor-associated kinase 1/IRAK1-dependent signaling during viral entry, representing a means by which the alphaviruses may evade innate immune detection and activation prior to viral gene expression. Inhibits host transcription. Forms a tetrameric complex with XPO1/CRM1 and the nuclear import receptor importin. This complex blocks the central channel of host nuclear pores thereby inhibiting the receptor-mediated nuclear transport and thus the host mRNA and rRNA transcription. The inhibition of transcription is linked to a cytopathic effect on the host cell. Functionally, provides the signal sequence for the translocation of the precursor of protein E3/E2 to the host endoplasmic reticulum. Furin-cleaved E3 remains associated with spike glycoprotein E1 and mediates pH protection of the latter during the transport via the secretory pathway. After virion release from the host cell, the assembly protein E3 is gradually released in the extracellular space. Its function is as follows. Plays a role in viral attachment to target host cell, by binding to the cell receptor. Synthesized as a p62 precursor which is processed by furin at the cell membrane just before virion budding, giving rise to E2-E1 heterodimer. The p62-E1 heterodimer is stable, whereas E2-E1 is unstable and dissociate at low pH. p62 is processed at the last step, presumably to avoid E1 fusion activation before its final export to cell surface. E2 C-terminus contains a transitory transmembrane that would be disrupted by palmitoylation, resulting in reorientation of the C-terminal tail from lumenal to cytoplasmic side. This step is critical since E2 C-terminus is involved in budding by interacting with capsid proteins. This release of E2 C-terminus in cytoplasm occurs lately in protein export, and precludes premature assembly of particles at the endoplasmic reticulum membrane. In terms of biological role, constitutive membrane protein involved in virus glycoprotein processing, cell permeabilization, and the budding of viral particles. Disrupts the calcium homeostasis of the cell, probably at the endoplasmic reticulum level. This leads to cytoplasmic calcium elevation. Because of its lipophilic properties, the 6K protein is postulated to influence the selection of lipids that interact with the transmembrane domains of the glycoproteins, which, in turn, affects the deformability of the bilayer required for the extreme curvature that occurs as budding proceeds. Present in low amount in virions, about 3% compared to viral glycoproteins. Class II viral fusion protein. Fusion activity is inactive as long as E1 is bound to E2 in mature virion. After virus attachment to target cell and endocytosis, acidification of the endosome would induce dissociation of E1/E2 heterodimer and concomitant trimerization of the E1 subunits. This E1 trimer is fusion active, and promotes release of viral nucleocapsid in cytoplasm after endosome and viral membrane fusion. Efficient fusion requires the presence of cholesterol and sphingolipid in the target membrane. Fusion is optimal at levels of about 1 molecule of cholesterol per 2 molecules of phospholipids, and is specific for sterols containing a 3-beta-hydroxyl group. The chain is Structural polyprotein from Eastern equine encephalitis virus (strain va33[ten broeck]) (EEEV).